The primary structure comprises 419 residues: UDP-N-acetylglucosamine 1-carboxyvinyltransferase (419 aa).

22–23 (KN) contacts phosphoenolpyruvate. Arg92 is a UDP-N-acetyl-alpha-D-glucosamine binding site. The active-site Proton donor is Cys116. Cys116 carries the post-translational modification 2-(S-cysteinyl)pyruvic acid O-phosphothioketal. Asp307 and Val329 together coordinate UDP-N-acetyl-alpha-D-glucosamine.

The protein belongs to the EPSP synthase family. MurA subfamily.

The protein localises to the cytoplasm. It catalyses the reaction phosphoenolpyruvate + UDP-N-acetyl-alpha-D-glucosamine = UDP-N-acetyl-3-O-(1-carboxyvinyl)-alpha-D-glucosamine + phosphate. It participates in cell wall biogenesis; peptidoglycan biosynthesis. Functionally, cell wall formation. Adds enolpyruvyl to UDP-N-acetylglucosamine. In Pseudothermotoga lettingae (strain ATCC BAA-301 / DSM 14385 / NBRC 107922 / TMO) (Thermotoga lettingae), this protein is UDP-N-acetylglucosamine 1-carboxyvinyltransferase.